The primary structure comprises 376 residues: Mitogen-activated protein kinase 2 (376 aa).

The region spanning 32 to 319 is the Protein kinase domain; it reads YVPIKPIGRG…VTEALQHPYM (288 aa). Residues 38–46 and Lys-61 contribute to the ATP site; that span reads IGRGAYGVV. Residue Asp-158 is the Proton acceptor of the active site. Thr-191 carries the phosphothreonine modification. The short motif at 191–193 is the TXY element; sequence TEY. A Phosphotyrosine modification is found at Tyr-193. Thr-196 carries the post-translational modification Phosphothreonine.

It belongs to the protein kinase superfamily. CMGC Ser/Thr protein kinase family. MAP kinase subfamily. In terms of assembly, interacts with MKK3. Post-translationally, dually phosphorylated on Thr-191 and Tyr-193, which activates the enzyme. Phosphorylated on Ser residue. As to expression, highest levels in the stem. Present in the leaf, root and flower, but not in seeds.

It catalyses the reaction L-seryl-[protein] + ATP = O-phospho-L-seryl-[protein] + ADP + H(+). The enzyme catalyses L-threonyl-[protein] + ATP = O-phospho-L-threonyl-[protein] + ADP + H(+). With respect to regulation, activated by threonine and tyrosine phosphorylation. The protein is Mitogen-activated protein kinase 2 (MPK2) of Arabidopsis thaliana (Mouse-ear cress).